The sequence spans 342 residues: S-adenosylmethionine:tRNA ribosyltransferase-isomerase (342 aa).

Belongs to the QueA family. Monomer.

It localises to the cytoplasm. It carries out the reaction 7-aminomethyl-7-carbaguanosine(34) in tRNA + S-adenosyl-L-methionine = epoxyqueuosine(34) in tRNA + adenine + L-methionine + 2 H(+). It functions in the pathway tRNA modification; tRNA-queuosine biosynthesis. Transfers and isomerizes the ribose moiety from AdoMet to the 7-aminomethyl group of 7-deazaguanine (preQ1-tRNA) to give epoxyqueuosine (oQ-tRNA). This is S-adenosylmethionine:tRNA ribosyltransferase-isomerase from Shouchella clausii (strain KSM-K16) (Alkalihalobacillus clausii).